We begin with the raw amino-acid sequence, 370 residues long: Chloromuconate cycloisomerase (370 aa).

Lys-165 acts as the Proton acceptor in catalysis. Residues Asp-194, Glu-220, and Asp-245 each coordinate Mn(2+). Catalysis depends on Glu-323, which acts as the Proton donor.

This sequence belongs to the mandelate racemase/muconate lactonizing enzyme family. Mn(2+) serves as cofactor.

The catalysed reaction is 2-[(2R)-2-chloro-2,5-dihydro-5-oxofuryl]acetate = 3-chloro-cis,cis-muconate + H(+). Its pathway is aromatic compound metabolism; 3-chlorocatechol degradation. This Delftia acidovorans (Pseudomonas acidovorans) protein is Chloromuconate cycloisomerase (tfdD).